The following is a 250-amino-acid chain: Small ribosomal subunit protein uS3 (250 aa).

A KH type-2 domain is found at 39–111; the sequence is IRPLIKNHYP…KVQINIFEVK (73 aa).

This sequence belongs to the universal ribosomal protein uS3 family. As to quaternary structure, part of the 30S ribosomal subunit. Forms a tight complex with proteins S10 and S14.

Its function is as follows. Binds the lower part of the 30S subunit head. Binds mRNA in the 70S ribosome, positioning it for translation. In Ziziphus jujuba witches'-broom phytoplasma, this protein is Small ribosomal subunit protein uS3.